A 642-amino-acid polypeptide reads, in one-letter code: Medium-chain-fatty-acid--[acyl-carrier-protein] ligase TtuA (642 aa).

Belongs to the ATP-dependent AMP-binding enzyme family.

The enzyme catalyses a medium-chain fatty acid + holo-[ACP] + ATP = a medium-chain fatty acyl-[ACP] + AMP + diphosphate. It carries out the reaction a medium-chain fatty acid + ATP + H(+) = a medium-chain fatty acyl-AMP + diphosphate. The catalysed reaction is a medium-chain fatty acyl-AMP + holo-[ACP] = a medium-chain fatty acyl-[ACP] + AMP + H(+). It catalyses the reaction decanoate + holo-[ACP] + ATP = decanoyl-[ACP] + AMP + diphosphate. The enzyme catalyses decanoate + ATP + H(+) = decanoyl-AMP + diphosphate. It carries out the reaction decanoyl-AMP + holo-[ACP] = decanoyl-[ACP] + AMP + H(+). In terms of biological role, ligase likely involved in the biosynthesis of a polyyne metabolite. Catalyzes the activation of decanoic acid, followed by the loading of the activated decanoic acid onto the acyl carrier protein TtuC. Decanoic acid is the preferred substrate, but it can also use 10-undecenoic acid and lauric acid. Nonanoic acid and 7-octenoic acid are only weakly activated. The sequence is that of Medium-chain-fatty-acid--[acyl-carrier-protein] ligase TtuA from Teredinibacter turnerae (strain ATCC 39867 / T7901).